The sequence spans 487 residues: RCC1 repeat-containing protein DDB_G0284033 (487 aa).

RCC1 repeat units follow at residues S66–Y127, R207–N259, D260–S313, N373–T426, and D428–S483.

In Dictyostelium discoideum (Social amoeba), this protein is RCC1 repeat-containing protein DDB_G0284033.